The sequence spans 276 residues: Undecaprenyl-diphosphatase (276 aa).

Helical transmembrane passes span 48–68 (AANS…AIVF), 92–112 (LSIA…FLFE), 119–139 (LFSV…MLFA), 155–175 (ISYK…WPGF), 196–216 (ADFT…LSLV), 225–245 (DLMP…LFVV), and 255–275 (IKLV…LLIM).

The protein belongs to the UppP family.

It is found in the cell membrane. It carries out the reaction di-trans,octa-cis-undecaprenyl diphosphate + H2O = di-trans,octa-cis-undecaprenyl phosphate + phosphate + H(+). In terms of biological role, catalyzes the dephosphorylation of undecaprenyl diphosphate (UPP). Confers resistance to bacitracin. This is Undecaprenyl-diphosphatase from Bacillus subtilis (strain 168).